The sequence spans 567 residues: Wee1-like protein kinase 2 (567 aa).

Composition is skewed to basic and acidic residues over residues methionine 1 to glutamine 12 and glutamate 26 to glutamate 36. 2 disordered regions span residues methionine 1–serine 103 and arginine 170–valine 191. Residue serine 77 is modified to Phosphoserine. The short motif at lysine 174–lysine 176 is the Nuclear localization signal element. The region spanning phenylalanine 215 to leucine 494 is the Protein kinase domain. ATP is bound by residues isoleucine 221 to valine 229 and lysine 244. The Nuclear export signal signature appears at lysine 318–tyrosine 332. Aspartate 342 acts as the Proton acceptor in catalysis. Mg(2+) contacts are provided by asparagine 347 and aspartate 384. Residues alanine 497–glutamine 523 adopt a coiled-coil conformation. Positions glutamine 502 to proline 567 are disordered. The segment covering glutamate 507–glutamate 520 has biased composition (basic and acidic residues). Residues alanine 555–proline 567 are compositionally biased toward polar residues.

It belongs to the protein kinase superfamily. Ser/Thr protein kinase family. WEE1 subfamily. Post-translationally, phosphorylation leads to increase its activity.

The protein resides in the nucleus. The catalysed reaction is L-tyrosyl-[protein] + ATP = O-phospho-L-tyrosyl-[protein] + ADP + H(+). In terms of biological role, oocyte-specific protein tyrosine kinase that phosphorylates and inhibits CDK1 and acts as a key regulator of meiosis during both prophase I and metaphase II. Required to maintain meiotic arrest in oocytes during the germinal vesicle (GV) stage, a long period of quiescence at dictyate prophase I, by phosphorylating CDK1 at 'Tyr-15', leading to inhibit CDK1 activity and prevent meiotic reentry. Also required for metaphase II exit during egg activation by phosphorylating CDK1 at 'Tyr-15', to ensure exit from meiosis in oocytes and promote pronuclear formation. This chain is Wee1-like protein kinase 2 (WEE2), found in Canis lupus familiaris (Dog).